A 228-amino-acid polypeptide reads, in one-letter code: Type II methyltransferase M.HhaII (228 aa).

The protein belongs to the N(4)/N(6)-methyltransferase family.

The catalysed reaction is a 2'-deoxyadenosine in DNA + S-adenosyl-L-methionine = an N(6)-methyl-2'-deoxyadenosine in DNA + S-adenosyl-L-homocysteine + H(+). Its function is as follows. A beta subtype methylase, recognizes the double-stranded sequence 5'-GANTC-3', methylates A-2 on both strands, and protects the DNA from cleavage by the HhaII endonuclease. The sequence is that of Type II methyltransferase M.HhaII from Haemophilus parahaemolyticus.